The sequence spans 211 residues: Proteasome subunit beta (211 aa).

Positions 1 to 8 (MNQTLETG) are cleaved as a propeptide — removed in mature form; by autocatalysis. Thr-9 acts as the Nucleophile in catalysis.

The protein belongs to the peptidase T1B family. The 20S proteasome core is composed of 14 alpha and 14 beta subunits that assemble into four stacked heptameric rings, resulting in a barrel-shaped structure. The two inner rings, each composed of seven catalytic beta subunits, are sandwiched by two outer rings, each composed of seven alpha subunits. The catalytic chamber with the active sites is on the inside of the barrel. Has a gated structure, the ends of the cylinder being occluded by the N-termini of the alpha-subunits. Is capped at one or both ends by the proteasome regulatory ATPase, PAN.

The protein resides in the cytoplasm. The catalysed reaction is Cleavage of peptide bonds with very broad specificity.. Its activity is regulated as follows. The formation of the proteasomal ATPase PAN-20S proteasome complex, via the docking of the C-termini of PAN into the intersubunit pockets in the alpha-rings, triggers opening of the gate for substrate entry. Interconversion between the open-gate and close-gate conformations leads to a dynamic regulation of the 20S proteasome proteolysis activity. Its function is as follows. Component of the proteasome core, a large protease complex with broad specificity involved in protein degradation. The T.acidophilum proteasome is able to cleave oligopeptides after Tyr, Leu, Phe, and to a lesser extent after Glu and Arg. Thus, displays chymotrypsin-like activity and low level of caspase-like and trypsin-like activities. The polypeptide is Proteasome subunit beta (Thermoplasma acidophilum (strain ATCC 25905 / DSM 1728 / JCM 9062 / NBRC 15155 / AMRC-C165)).